Here is a 264-residue protein sequence, read N- to C-terminus: tRNA pseudouridine synthase A (264 aa).

Asp51 functions as the Nucleophile in the catalytic mechanism. Tyr109 lines the substrate pocket.

This sequence belongs to the tRNA pseudouridine synthase TruA family. In terms of assembly, homodimer.

It carries out the reaction uridine(38/39/40) in tRNA = pseudouridine(38/39/40) in tRNA. In terms of biological role, formation of pseudouridine at positions 38, 39 and 40 in the anticodon stem and loop of transfer RNAs. This chain is tRNA pseudouridine synthase A, found in Polaromonas sp. (strain JS666 / ATCC BAA-500).